We begin with the raw amino-acid sequence, 296 residues long: Protein FAM221A (296 aa).

A disordered region spans residues 235–263; it reads MQPPSTSSPQPLAVGPSTQISSLRKPEED. The span at 237-256 shows a compositional bias: polar residues; it reads PPSTSSPQPLAVGPSTQISS.

This sequence belongs to the FAM221 family.

This is Protein FAM221A (Fam221a) from Rattus norvegicus (Rat).